The following is a 32-amino-acid chain: U3-cyrtautoxin-As1a (32 aa).

3 disulfide bridges follow: Cys-4-Cys-19, Cys-11-Cys-24, and Cys-18-Cys-29.

The protein belongs to the neurotoxin 14 (magi-1) family. It to aptotoxin III. In terms of tissue distribution, expressed by the venom gland.

Its subcellular location is the secreted. Is both paralytic and lethal, when injected into lepidopteran larvae. Is a slower acting toxin, being lethal at 24 hours, but not paralytic at 1 hour post-injection. This chain is U3-cyrtautoxin-As1a, found in Apomastus schlingeri (Trap-door spider).